The primary structure comprises 387 residues: Protein TsgA homolog (387 aa).

Helical transmembrane passes span 11-31 (WISF…GMIM), 47-67 (NIFT…SWLI), 76-96 (LIFG…STSI), 101-121 (INIF…TFII), 134-154 (LLLT…ISAY), 160-180 (ILWY…FILT), 205-225 (IILL…FISW), 243-263 (VLVS…SFII), 271-291 (MFIF…YSKS), 299-319 (IISL…LASL), 331-351 (LILF…SPIV), and 358-378 (TTLI…CIIF).

The protein belongs to the major facilitator superfamily. TsgA family.

It is found in the cell membrane. This is Protein TsgA homolog from Buchnera aphidicola subsp. Schizaphis graminum (strain Sg).